The chain runs to 93 residues: MSRSLKKGPFVADHLLKKIEKLNIKGIQKVIVTWSRSSTIVPIMIGHTVAVHNGREHIPVFITDKMVGHKLGEFALTRTFKTHTKKVNKKTKR.

It belongs to the universal ribosomal protein uS19 family.

The protein localises to the plastid. It is found in the chloroplast. Protein S19 forms a complex with S13 that binds strongly to the 16S ribosomal RNA. This Stigeoclonium helveticum (Green alga) protein is Small ribosomal subunit protein uS19c.